The chain runs to 372 residues: GTPase Obg (372 aa).

In terms of domain architecture, Obg spans 1-159 (MKFIDEARIE…RMLKLELKVL (159 aa)). Positions 128–147 (LHFKSSTNRAPRQKTDGKPG) are disordered. The OBG-type G domain maps to 160 to 334 (ADVGLLGMPN…LVYAIHDYLV (175 aa)). GTP is bound by residues 166–173 (GMPNAGKS), 191–195 (FTTLA), 213–216 (DIPG), 284–287 (NKLD), and 315–317 (SAL). Mg(2+)-binding residues include S173 and T193.

The protein belongs to the TRAFAC class OBG-HflX-like GTPase superfamily. OBG GTPase family. Monomer. The cofactor is Mg(2+).

The protein resides in the cytoplasm. Functionally, an essential GTPase which binds GTP, GDP and possibly (p)ppGpp with moderate affinity, with high nucleotide exchange rates and a fairly low GTP hydrolysis rate. Plays a role in control of the cell cycle, stress response, ribosome biogenesis and in those bacteria that undergo differentiation, in morphogenesis control. This is GTPase Obg from Burkholderia mallei (strain NCTC 10247).